We begin with the raw amino-acid sequence, 100 residues long: Small ribosomal subunit protein uS17 (100 aa).

The protein belongs to the universal ribosomal protein uS17 family. As to quaternary structure, part of the 30S ribosomal subunit.

In terms of biological role, one of the primary rRNA binding proteins, it binds specifically to the 5'-end of 16S ribosomal RNA. This Fervidobacterium nodosum (strain ATCC 35602 / DSM 5306 / Rt17-B1) protein is Small ribosomal subunit protein uS17.